We begin with the raw amino-acid sequence, 337 residues long: Phenylalanine--tRNA ligase alpha subunit (337 aa).

Glu-258 serves as a coordination point for Mg(2+).

It belongs to the class-II aminoacyl-tRNA synthetase family. Phe-tRNA synthetase alpha subunit type 1 subfamily. Tetramer of two alpha and two beta subunits. The cofactor is Mg(2+).

The protein resides in the cytoplasm. It catalyses the reaction tRNA(Phe) + L-phenylalanine + ATP = L-phenylalanyl-tRNA(Phe) + AMP + diphosphate + H(+). The protein is Phenylalanine--tRNA ligase alpha subunit of Burkholderia mallei (strain ATCC 23344).